Consider the following 380-residue polypeptide: Cytochrome b (380 aa).

4 helical membrane passes run 34 to 54 (FGSL…FLAM), 78 to 99 (WLIR…YLHI), 114 to 134 (WNIG…GYVL), and 179 to 199 (FFTF…IHLL). The heme b site is built by His84 and His98. Heme b contacts are provided by His183 and His197. A ubiquinone is bound at residue His202. 4 helical membrane-spanning segments follow: residues 227 to 247 (YKDL…ALFT), 289 to 309 (LGGV…PILH), 321 to 341 (ITQI…WIGG), and 348 to 368 (FITI…ILFP).

The protein belongs to the cytochrome b family. In terms of assembly, the cytochrome bc1 complex contains 3 respiratory subunits (MT-CYB, CYC1 and UQCRFS1), 2 core proteins (UQCRC1 and UQCRC2) and probably 6 low-molecular weight proteins. It depends on heme b as a cofactor.

It is found in the mitochondrion inner membrane. Its function is as follows. Component of the ubiquinol-cytochrome c reductase complex (complex III or cytochrome b-c1 complex) that is part of the mitochondrial respiratory chain. The b-c1 complex mediates electron transfer from ubiquinol to cytochrome c. Contributes to the generation of a proton gradient across the mitochondrial membrane that is then used for ATP synthesis. The polypeptide is Cytochrome b (mt-cyb) (Hemitrygon laosensis (Mekong freshwater stingray)).